A 198-amino-acid chain; its full sequence is Na(+)-translocating NADH-quinone reductase subunit E (198 aa).

A run of 6 helical transmembrane segments spans residues 11–31 (AVFI…FLAV), 35–55 (VTTA…SVPA), 77–97 (FLNF…LEMI), 109–129 (LGIF…VSFM), 140–160 (IVYG…LASI), and 176–196 (LGIT…FSGV).

This sequence belongs to the NqrDE/RnfAE family. Composed of six subunits; NqrA, NqrB, NqrC, NqrD, NqrE and NqrF.

It localises to the cell inner membrane. It catalyses the reaction a ubiquinone + n Na(+)(in) + NADH + H(+) = a ubiquinol + n Na(+)(out) + NAD(+). Functionally, NQR complex catalyzes the reduction of ubiquinone-1 to ubiquinol by two successive reactions, coupled with the transport of Na(+) ions from the cytoplasm to the periplasm. NqrA to NqrE are probably involved in the second step, the conversion of ubisemiquinone to ubiquinol. This Photorhabdus laumondii subsp. laumondii (strain DSM 15139 / CIP 105565 / TT01) (Photorhabdus luminescens subsp. laumondii) protein is Na(+)-translocating NADH-quinone reductase subunit E.